Reading from the N-terminus, the 762-residue chain is 5-methyltetrahydropteroyltriglutamate--homocysteine methyltransferase (762 aa).

5-methyltetrahydropteroyltri-L-glutamate contacts are provided by residues 17–20 (REWK) and Lys111. Residues 435–437 (IGS) and Glu488 each bind L-homocysteine. L-methionine-binding positions include 435 to 437 (IGS) and Glu488. 5-methyltetrahydropteroyltri-L-glutamate-binding positions include 519–520 (RC) and Trp565. Asp603 serves as a coordination point for L-homocysteine. Asp603 lines the L-methionine pocket. Glu609 contacts 5-methyltetrahydropteroyltri-L-glutamate. The Zn(2+) site is built by His645, Cys647, and Glu669. His698 functions as the Proton donor in the catalytic mechanism. Cys730 lines the Zn(2+) pocket.

This sequence belongs to the vitamin-B12 independent methionine synthase family. Zn(2+) is required as a cofactor.

The enzyme catalyses 5-methyltetrahydropteroyltri-L-glutamate + L-homocysteine = tetrahydropteroyltri-L-glutamate + L-methionine. It participates in amino-acid biosynthesis; L-methionine biosynthesis via de novo pathway; L-methionine from L-homocysteine (MetE route): step 1/1. Catalyzes the transfer of a methyl group from 5-methyltetrahydrofolate to homocysteine resulting in methionine formation. The polypeptide is 5-methyltetrahydropteroyltriglutamate--homocysteine methyltransferase (Bacillus thuringiensis (strain Al Hakam)).